Consider the following 1164-residue polypeptide: DNA-directed RNA polymerase 132 kDa polypeptide (1164 aa).

Belongs to the RNA polymerase beta chain family. The DNA-dependent RNA polymerase used for intermediate and late genes expression consists of eight subunits (147) kDa, (133) kDa, (35) kDa, (30) kDa, (22) kDa, (19) kDa, (18) kDa and (7) kDa totalling more than 500 kDa in mass. The same holoenzyme, with the addition of the transcription-specificity factor RAP94, is used for early gene expression.

It is found in the virion. The enzyme catalyses RNA(n) + a ribonucleoside 5'-triphosphate = RNA(n+1) + diphosphate. Its function is as follows. Part of the DNA-dependent RNA polymerase which catalyzes the transcription of viral DNA into RNA using the four ribonucleoside triphosphates as substrates. Responsible for the transcription of early, intermediate and late genes. DNA-dependent RNA polymerase associates with the early transcription factor (ETF), itself composed of D6 and A7, thereby allowing the early genes transcription. Late transcription, and probably also intermediate transcription, require newly synthesized RNA polymerase. In Bos taurus (Bovine), this protein is DNA-directed RNA polymerase 132 kDa polypeptide (RPO132).